The primary structure comprises 378 residues: Erythronate-4-phosphate dehydrogenase (378 aa).

Substrate contacts are provided by Ser45 and Thr66. Asp146 and Thr175 together coordinate NAD(+). Residue Arg208 is part of the active site. Asp232 lines the NAD(+) pocket. The active site involves Glu237. His254 (proton donor) is an active-site residue. Gly257 lines the NAD(+) pocket. A substrate-binding site is contributed by Tyr258.

This sequence belongs to the D-isomer specific 2-hydroxyacid dehydrogenase family. PdxB subfamily. As to quaternary structure, homodimer.

The protein resides in the cytoplasm. The enzyme catalyses 4-phospho-D-erythronate + NAD(+) = (R)-3-hydroxy-2-oxo-4-phosphooxybutanoate + NADH + H(+). It participates in cofactor biosynthesis; pyridoxine 5'-phosphate biosynthesis; pyridoxine 5'-phosphate from D-erythrose 4-phosphate: step 2/5. Functionally, catalyzes the oxidation of erythronate-4-phosphate to 3-hydroxy-2-oxo-4-phosphonooxybutanoate. The chain is Erythronate-4-phosphate dehydrogenase from Escherichia coli O127:H6 (strain E2348/69 / EPEC).